The sequence spans 426 residues: D-tagatose-1,6-bisphosphate aldolase subunit KbaZ (426 aa).

The protein belongs to the GatZ/KbaZ family. KbaZ subfamily. In terms of assembly, forms a complex with KbaY.

It participates in carbohydrate metabolism; D-tagatose 6-phosphate degradation; D-glyceraldehyde 3-phosphate and glycerone phosphate from D-tagatose 6-phosphate: step 2/2. Component of the tagatose-1,6-bisphosphate aldolase KbaYZ that is required for full activity and stability of the Y subunit. Could have a chaperone-like function for the proper and stable folding of KbaY. When expressed alone, KbaZ does not show any aldolase activity. This Escherichia coli O81 (strain ED1a) protein is D-tagatose-1,6-bisphosphate aldolase subunit KbaZ.